Reading from the N-terminus, the 267-residue chain is Lectin SfL-1 (267 aa).

A run of 4 repeats spans residues 1 to 67 (GRYT…RRGD), 68 to 135 (SNNY…QSGG), 136 to 202 (DSYN…STGG), and 203 to 267 (SNYK…GTAI). The tract at residues 1 to 267 (GRYTVQNQWG…GPIGFKGTAI (267 aa)) is 4 X approximate tandem repeats.

In terms of assembly, monomer.

Functionally, lectin specific for high mannose N-glycans, recognizes the branched moiety of these glycans. Does not recognize other types of N-glycans or monosaccharides. This Solieria filiformis (Red alga) protein is Lectin SfL-1.